A 135-amino-acid chain; its full sequence is Mediator of RNA polymerase II transcription subunit 10 (135 aa).

This sequence belongs to the Mediator complex subunit 10 family. In terms of assembly, component of the Mediator complex, which is composed of MED1, MED4, MED6, MED7, MED8, MED9, MED10, MED11, MED12, MED13, MED13L, MED14, MED15, MED16, MED17, MED18, MED19, MED20, MED21, MED22, MED23, MED24, MED25, MED26, MED27, MED29, MED30, MED31, CCNC, CDK8 and CDC2L6/CDK11. The MED12, MED13, CCNC and CDK8 subunits form a distinct module termed the CDK8 module. Mediator containing the CDK8 module is less active than Mediator lacking this module in supporting transcriptional activation. Individual preparations of the Mediator complex lacking one or more distinct subunits have been variously termed ARC, CRSP, DRIP, PC2, SMCC and TRAP.

Its subcellular location is the nucleus. Its function is as follows. Component of the Mediator complex, a coactivator involved in the regulated transcription of nearly all RNA polymerase II-dependent genes. Mediator functions as a bridge to convey information from gene-specific regulatory proteins to the basal RNA polymerase II transcription machinery. Mediator is recruited to promoters by direct interactions with regulatory proteins and serves as a scaffold for the assembly of a functional preinitiation complex with RNA polymerase II and the general transcription factors. This is Mediator of RNA polymerase II transcription subunit 10 (MED10) from Macaca fascicularis (Crab-eating macaque).